Consider the following 139-residue polypeptide: Peptide methionine sulfoxide reductase MsrB (139 aa).

Positions 9–131 (TPSDNTELTE…NSASLSFIDD (123 aa)) constitute a MsrB domain. Residues Cys48, Cys51, Cys97, and Cys100 each coordinate Zn(2+). The active-site Nucleophile is Cys120.

It belongs to the MsrB Met sulfoxide reductase family. Zn(2+) is required as a cofactor.

It catalyses the reaction L-methionyl-[protein] + [thioredoxin]-disulfide + H2O = L-methionyl-(R)-S-oxide-[protein] + [thioredoxin]-dithiol. The polypeptide is Peptide methionine sulfoxide reductase MsrB (Pectobacterium carotovorum subsp. carotovorum (strain PC1)).